We begin with the raw amino-acid sequence, 244 residues long: Carboxy-S-adenosyl-L-methionine synthase (244 aa).

S-adenosyl-L-methionine-binding positions include Y40, 65–67 (GCS), 90–91 (DN), N134, and R201.

This sequence belongs to the class I-like SAM-binding methyltransferase superfamily. Cx-SAM synthase family. Homodimer.

It catalyses the reaction prephenate + S-adenosyl-L-methionine = carboxy-S-adenosyl-L-methionine + 3-phenylpyruvate + H2O. Its function is as follows. Catalyzes the conversion of S-adenosyl-L-methionine (SAM) to carboxy-S-adenosyl-L-methionine (Cx-SAM). The protein is Carboxy-S-adenosyl-L-methionine synthase of Citrifermentans bemidjiense (strain ATCC BAA-1014 / DSM 16622 / JCM 12645 / Bem) (Geobacter bemidjiensis).